Consider the following 389-residue polypeptide: MIRNGRGAAGGAEQPGPGGRRAVRVWCDGCYDMVHYGHSNQLRQARAMGDYLIVGVHTDEEIAKHKGPPVFTQEERYKMVQAIKWVDEVVPAAPYVTTLETLDKYNCDFCVHGNDITLTVDGRDTYEEVKQAGRYRECKRTQGVSTTDLVGRMLLVTKAHHSSQEMSSEYREYADSFGKCPGGRNPWTGVSQFLQTSQKIIQFASGKEPQPGETVIYVAGAFDLFHIGHVDFLEKVHRLAERPYIIAGLHFDQEVNHYKGKNYPIMNLHERTLSVLACRYVSEVVIGAPYAVTAELLSHFKVDLVCHGKTEIIPDRDGSDPYQEPKRRGIFRQIDSGSNLTTDLIVQRIITNRLEYEARNQKKEAKELAFLEAARQQAAQPLGERDGDF.

Positions 1–20 (MIRNGRGAAGGAEQPGPGGR) are disordered. CTP contacts are provided by residues 221-222 (AF), 229-232 (HVDF), Lys-259, 307-310 (HGKT), and 336-340 (SGSNL). Position 338 is a phosphoserine (Ser-338). Phosphothreonine occurs at positions 341 and 342.

This sequence belongs to the cytidylyltransferase family. In terms of tissue distribution, strongest expression in liver, heart, and skeletal muscle.

The catalysed reaction is phosphoethanolamine + CTP + H(+) = CDP-ethanolamine + diphosphate. It functions in the pathway phospholipid metabolism; phosphatidylethanolamine biosynthesis; phosphatidylethanolamine from ethanolamine: step 2/3. Its function is as follows. Ethanolamine-phosphate cytidylyltransferase that catalyzes the second step in the synthesis of phosphatidylethanolamine (PE) from ethanolamine via the CDP-ethanolamine pathway. Phosphatidylethanolamine is a dominant inner-leaflet phospholipid in cell membranes, where it plays a role in membrane function by structurally stabilizing membrane-anchored proteins, and participates in important cellular processes such as cell division, cell fusion, blood coagulation, and apoptosis. This Homo sapiens (Human) protein is Ethanolamine-phosphate cytidylyltransferase (PCYT2).